A 262-amino-acid chain; its full sequence is 14-3-3-like protein B (262 aa).

It belongs to the 14-3-3 family.

This Hordeum vulgare (Barley) protein is 14-3-3-like protein B.